A 206-amino-acid polypeptide reads, in one-letter code: MKVLVTGFEPFGGEEINPSWEAVKGLPNEIEGADIIKFQLPVTFSGVREILPRLIVKERPDAVILTGQAGGRPNITVERVAINVMDSTMPDNEGYKPEDEPVFEGAPAAYFATIPVKAIVKALREAKIPAAVSNTAGTYVCNAAMFTALHTIEVSGMTTKAGFIHVPFSHEQALDKPRPSMALETIRKGLEIAIKMVFEDLTREGY.

Catalysis depends on residues E78, C141, and H165.

Belongs to the peptidase C15 family. In terms of assembly, homotetramer.

The protein localises to the cytoplasm. The enzyme catalyses Release of an N-terminal pyroglutamyl group from a polypeptide, the second amino acid generally not being Pro.. Its function is as follows. Removes 5-oxoproline from various penultimate amino acid residues except L-proline. This Thermococcus kodakarensis (strain ATCC BAA-918 / JCM 12380 / KOD1) (Pyrococcus kodakaraensis (strain KOD1)) protein is Pyrrolidone-carboxylate peptidase.